Here is a 299-residue protein sequence, read N- to C-terminus: N-acetylaspartate synthetase (299 aa).

A compositionally biased stretch (pro residues) spans 44 to 57 (AAPGPAAAPPPAAG). The segment at 44–70 (AAPGPAAAPPPAAGPQPHGGTGGAGPP) is disordered. Residues 60–70 (PHGGTGGAGPP) show a composition bias toward gly residues. The helical transmembrane segment at 118 to 138 (YALLAALCFAVTRSLLLTCLV) threads the bilayer. An N-acetyltransferase domain is found at 143–280 (LALRYYYSRK…VLPGMTLSLA (138 aa)).

The protein belongs to the NAT8 family. Expressed in brain, including in mesencephalic dopaminergic neurons of the substantia nigra and ventral tegmental area and oligodendrocytes. Expressed in cortical pyramidal neurons and granule cells of the hippocampus (at protein level).

Its subcellular location is the cytoplasm. The protein localises to the microsome membrane. The protein resides in the mitochondrion membrane. It is found in the endoplasmic reticulum membrane. It carries out the reaction L-aspartate + acetyl-CoA = N-acetyl-L-aspartate + CoA + H(+). Its activity is regulated as follows. Aminooxyacetic acid (AOAA) blocks its activity in both cytoplasm and mitochondria. Catalyzes the synthesis of N-acetylaspartate acid (NAA) from L-aspartate and acetyl-CoA. Promotes dopamine uptake by regulating TNF-alpha expression. Attenuates methamphetamine-induced inhibition of dopamine uptake. The protein is N-acetylaspartate synthetase (Nat8l) of Rattus norvegicus (Rat).